Consider the following 301-residue polypeptide: uncharacterized protein (301 aa).

This sequence belongs to the asfivirus E301R family. In terms of assembly, interacts with host IRF3.

In terms of biological role, plays a role in the inhibition of host innate immune system by acting as a negatively regulator of type I interferon production. Mechanistically, interacts with and prevents host IRF3 nuclear localization to inhibit its transcriptional activity. This is an uncharacterized protein from Ornithodoros (relapsing fever ticks).